The primary structure comprises 1176 residues: Condensin complex subunit 1 (1176 aa).

Phosphoserine occurs at positions 464 and 475.

It belongs to the CND1 (condensin subunit 1) family. As to quaternary structure, component of the condensin complex, which contains the SMC2 and SMC4 heterodimer, and three non SMC subunits that probably regulate the complex: BRN1, YCS4 and YCG1/YCS5.

It is found in the nucleus. It localises to the chromosome. In terms of biological role, regulatory subunit of the condensin complex, a complex required for conversion of interphase chromatin into mitotic-like condense chromosomes. The condensin complex probably introduces positive supercoils into relaxed DNA in the presence of type I topoisomerases and converts nicked DNA into positive knotted forms in the presence of type II topoisomerases. The condensin complex probably also plays a role during interphase. The sequence is that of Condensin complex subunit 1 (YCS4) from Saccharomyces cerevisiae (strain ATCC 204508 / S288c) (Baker's yeast).